We begin with the raw amino-acid sequence, 1269 residues long: Myb-binding protein 1A-like protein (1269 aa).

The segment at 708–783 (DPNKDEDESG…EEDEAMEEGQ (76 aa)) is disordered. Residues 721–730 (TDDKKRKLKE) show a composition bias toward basic and acidic residues. Positions 731–783 (EDEDDDDEEEDDDNDEGDDDDDDDDEEEGGEEGEESSDSSDDEEEDEAMEEGQ) are enriched in acidic residues. Ser-810 is modified (phosphoserine). The tract at residues 1163–1269 (VKKVPEAEQT…KKKKKGADGE (107 aa)) is disordered. A compositionally biased stretch (basic residues) spans 1177–1195 (KKKKGFLPETKKRKNRKKP). Residues 1199–1211 (EGKETETPVEKTP) are compositionally biased toward basic and acidic residues. Basic residues-rich tracts occupy residues 1221-1232 (NKNKKKNKKRKQ) and 1256-1269 (KQKK…ADGE).

It belongs to the MYBBP1A family.

It localises to the nucleus. It is found in the nucleolus. Its function is as follows. May activate or repress transcription via interactions with sequence specific DNA-binding proteins. May play a role in the repression of the circadian clock gene expression. This chain is Myb-binding protein 1A-like protein (mybbp1a), found in Danio rerio (Zebrafish).